Here is a 443-residue protein sequence, read N- to C-terminus: Thymidine phosphorylase (443 aa).

Belongs to the thymidine/pyrimidine-nucleoside phosphorylase family. As to quaternary structure, homodimer.

It carries out the reaction thymidine + phosphate = 2-deoxy-alpha-D-ribose 1-phosphate + thymine. It participates in pyrimidine metabolism; dTMP biosynthesis via salvage pathway; dTMP from thymine: step 1/2. Functionally, the enzymes which catalyze the reversible phosphorolysis of pyrimidine nucleosides are involved in the degradation of these compounds and in their utilization as carbon and energy sources, or in the rescue of pyrimidine bases for nucleotide synthesis. In Shewanella sp. (strain ANA-3), this protein is Thymidine phosphorylase.